The following is a 342-amino-acid chain: Dysbindin (342 aa).

Residue serine 11 is modified to Phosphoserine. The stretch at 83–180 forms a coiled coil; sequence LSAHWEKKQA…AELDAEHSQK (98 aa). The Nuclear export signal motif lies at 243-256; the sequence is LMDISDQEALDVFL. The interval 263–342 is disordered; that stretch reads NTLLSPISGP…ATLHSDDSDS (80 aa). Over residues 286–305 the composition is skewed to low complexity; the sequence is PTPSQAPATPPSSSSPGTDP. Serine 316, serine 321, and serine 340 each carry phosphoserine.

It belongs to the dysbindin family. Interacts (via its coiled coil domain) with KXD1. Interacts with CMYA5, PI4K2 and RNF151. Component of the biogenesis of lysosome-related organelles complex 1 (BLOC-1) composed of at least BLOC1S1, BLOC1S2, BLOC1S3, BLOC1S4, BLOC1S5, BLOC1S6, DTNBP1/BLOC1S7 and SNAPIN/BLOC1S8. Interacts directly in the complex with BLOC1S5, BLOC1S6 and SNAPIN/BLOC1S8. The BLOC-1 complex associates with the AP-3 protein complex and membrane protein cargos. This BLOC-1 complex also associates with the BLOC-2 complex in endosomes. Binds to DTNA and DTNB but may not be a physiological binding partner. Interacts with the DNA-dependent protein kinase complex DNA-PK; the interaction phosphorylates DTNBP1 in vitro. Interacts directly in this complex with XRCC5 and XRCC6. Interacts with AP3M1, AP3B2 and TRIM32. Interacts with XPO1; the interaction exports DTNBP1 out of the nucleus. Ubiquitinated by TRIM32. Ubiquitination leads to DTNBP1 degradation.

It localises to the cytoplasm. The protein resides in the cytoplasmic vesicle membrane. It is found in the cytoplasmic vesicle. Its subcellular location is the secretory vesicle. The protein localises to the synaptic vesicle membrane. It localises to the endosome membrane. The protein resides in the melanosome membrane. It is found in the nucleus. Its subcellular location is the postsynaptic density. The protein localises to the presynaptic cell membrane. It localises to the endoplasmic reticulum. Functionally, component of the BLOC-1 complex, a complex that is required for normal biogenesis of lysosome-related organelles (LRO), such as platelet dense granules and melanosomes. In concert with the AP-3 complex, the BLOC-1 complex is required to target membrane protein cargos into vesicles assembled at cell bodies for delivery into neurites and nerve terminals. The BLOC-1 complex, in association with SNARE proteins, is also proposed to be involved in neurite extension. Associates with the BLOC-2 complex to facilitate the transport of TYRP1 independent of AP-3 function. Plays a role in synaptic vesicle trafficking and in neurotransmitter release. Plays a role in the regulation of cell surface exposure of DRD2. May play a role in actin cytoskeleton reorganization and neurite outgrowth. May modulate MAPK8 phosphorylation. Appears to promote neuronal transmission and viability through regulating the expression of SNAP25 and SYN1, modulating PI3-kinase-Akt signaling and influencing glutamatergic release. Regulates the expression of SYN1 through binding to its promoter. Modulates prefrontal cortical activity via the dopamine/D2 pathway. In Bos taurus (Bovine), this protein is Dysbindin (DTNBP1).